We begin with the raw amino-acid sequence, 64 residues long: Alpha-like toxin Lqh6 (64 aa).

In terms of domain architecture, LCN-type CS-alpha/beta spans 2-63 (RDGYIAQPEN…GIIVDGVKCH (62 aa)). 4 disulfide bridges follow: cysteine 12/cysteine 62, cysteine 16/cysteine 34, cysteine 20/cysteine 44, and cysteine 24/cysteine 46. A Lysine amide modification is found at lysine 64.

The protein belongs to the long (4 C-C) scorpion toxin superfamily. Sodium channel inhibitor family. Alpha subfamily. Expressed by the venom gland.

It localises to the secreted. Alpha toxins bind voltage-independently at site-3 of sodium channels (Nav) and inhibit the inactivation of the activated channels, thereby blocking neuronal transmission. This toxin is highly toxic to insects and mice, and inhibits the binding of alpha-toxin to cockroach neuronal membranes. The protein is Alpha-like toxin Lqh6 of Leiurus hebraeus (Hebrew deathstalker scorpion).